Here is a 397-residue protein sequence, read N- to C-terminus: L-cysteine desulfidase (397 aa).

Cys-23 functions as the Proton acceptor in the catalytic mechanism. Positions 288, 330, and 337 each coordinate [4Fe-4S] cluster.

Belongs to the L-cysteine desulfidase family. Homotrimer. It depends on [4Fe-4S] cluster as a cofactor.

The enzyme catalyses L-cysteine + H2O = hydrogen sulfide + pyruvate + NH4(+) + H(+). In terms of biological role, catalyzes the cleavage of L-cysteine to form 2-aminoprop-2-enoate and sulfide. The former then spontaneously hydrolyzes to pyruvate and NH(3). May be responsible for the production of sulfide required for the biosynthesis of iron-sulfur centers in this archaea. This chain is L-cysteine desulfidase, found in Methanococcus maripaludis (strain C5 / ATCC BAA-1333).